The chain runs to 333 residues: NADH-quinone oxidoreductase subunit H (333 aa).

8 helical membrane-spanning segments follow: residues Phe15 to Tyr35, Phe88 to Phe108, Ile117 to Thr137, Ile159 to Leu179, Val191 to Glu211, Phe241 to Phe261, Phe273 to Trp293, and Val313 to Phe333.

It belongs to the complex I subunit 1 family. NDH-1 is composed of 14 different subunits. Subunits NuoA, H, J, K, L, M, N constitute the membrane sector of the complex.

The protein resides in the cell membrane. The enzyme catalyses a quinone + NADH + 5 H(+)(in) = a quinol + NAD(+) + 4 H(+)(out). Functionally, NDH-1 shuttles electrons from NADH, via FMN and iron-sulfur (Fe-S) centers, to quinones in the respiratory chain. The immediate electron acceptor for the enzyme in this species is believed to be ubiquinone. Couples the redox reaction to proton translocation (for every two electrons transferred, four hydrogen ions are translocated across the cytoplasmic membrane), and thus conserves the redox energy in a proton gradient. This subunit may bind ubiquinone. This Bacillus cytotoxicus (strain DSM 22905 / CIP 110041 / 391-98 / NVH 391-98) protein is NADH-quinone oxidoreductase subunit H.